The following is a 239-amino-acid chain: Claudin-14 (239 aa).

Topologically, residues 1–7 (MASTAVQ) are cytoplasmic. Residues 8 to 28 (LLGFLLSFLGMVGTLITTILP) traverse the membrane as a helical segment. At 29-81 (HWRRTAHVGTNILTAVSYLKGLWMECVWHSTGIYQCQIYRSLLALPRDLQAAR) the chain is on the extracellular side. A helical transmembrane segment spans residues 82-102 (ALMVISCLLSGMACACAVVGM). The Cytoplasmic portion of the chain corresponds to 103–115 (KCTRCAKGTPAKT). Residues 116-136 (TFAVLGGALFLLAGLLCMVAV) traverse the membrane as a helical segment. Residues 137-162 (SWTTNDVVQNFYNPLLPSGMKFEIGQ) are Extracellular-facing. A helical transmembrane segment spans residues 163-183 (ALYLGFISSSLSLIGGTLLCL). At 184–239 (SCQDEAPYRPYPPQSRAGATTTATAPAYRPPAAYKDNRAPSVTSAAHSGYRLNDYV) the chain is on the cytoplasmic side.

Belongs to the claudin family. In terms of tissue distribution, expressed in all sensory epithelia of the inner ear vestibular organs, as well as in liver and kidney.

Its subcellular location is the cell junction. It is found in the tight junction. It localises to the cell membrane. Plays a major role in tight junction-specific obliteration of the intercellular space, through calcium-independent cell-adhesion activity. The polypeptide is Claudin-14 (Cldn14) (Mus musculus (Mouse)).